A 345-amino-acid polypeptide reads, in one-letter code: Quinolinate synthase (345 aa).

Residues His-69 and Ser-87 each contribute to the iminosuccinate site. Cys-132 lines the [4Fe-4S] cluster pocket. Iminosuccinate-binding positions include Tyr-158–Asn-160 and Ser-175. Residue Cys-217 coordinates [4Fe-4S] cluster. Residues His-243 to Glu-245 and Thr-260 contribute to the iminosuccinate site. Cys-303 contributes to the [4Fe-4S] cluster binding site.

It belongs to the quinolinate synthase family. Type 2 subfamily. [4Fe-4S] cluster serves as cofactor.

The protein localises to the cytoplasm. The catalysed reaction is iminosuccinate + dihydroxyacetone phosphate = quinolinate + phosphate + 2 H2O + H(+). The protein operates within cofactor biosynthesis; NAD(+) biosynthesis; quinolinate from iminoaspartate: step 1/1. Functionally, catalyzes the condensation of iminoaspartate with dihydroxyacetone phosphate to form quinolinate. This Agrobacterium fabrum (strain C58 / ATCC 33970) (Agrobacterium tumefaciens (strain C58)) protein is Quinolinate synthase.